The following is a 318-amino-acid chain: Protein-methionine-sulfoxide reductase catalytic subunit MsrP (318 aa).

The segment at residues 1 to 40 (MNRFTRYDVTPEAIFNQRRQIIKAMGLGAAALSLPNIGFA) is a signal peptide (tat-type signal). Mo-molybdopterin contacts are provided by residues asparagine 72, 75–76 (YE), cysteine 130, threonine 165, asparagine 217, arginine 222, and 233–235 (SIK).

Belongs to the MsrP family. As to quaternary structure, heterodimer of a catalytic subunit (MsrP) and a heme-binding subunit (MsrQ). Requires Mo-molybdopterin as cofactor. Post-translationally, predicted to be exported by the Tat system. The position of the signal peptide cleavage has not been experimentally proven.

It localises to the periplasm. The catalysed reaction is L-methionyl-[protein] + a quinone + H2O = L-methionyl-(S)-S-oxide-[protein] + a quinol. It catalyses the reaction L-methionyl-[protein] + a quinone + H2O = L-methionyl-(R)-S-oxide-[protein] + a quinol. In terms of biological role, part of the MsrPQ system that repairs oxidized periplasmic proteins containing methionine sulfoxide residues (Met-O), using respiratory chain electrons. Thus protects these proteins from oxidative-stress damage caused by reactive species of oxygen and chlorine generated by the host defense mechanisms. MsrPQ is essential for the maintenance of envelope integrity under bleach stress, rescuing a wide series of structurally unrelated periplasmic proteins from methionine oxidation. The catalytic subunit MsrP is non-stereospecific, being able to reduce both (R-) and (S-) diastereoisomers of methionine sulfoxide. This is Protein-methionine-sulfoxide reductase catalytic subunit MsrP from Actinobacillus pleuropneumoniae serotype 5b (strain L20).